Here is an 87-residue protein sequence, read N- to C-terminus: UPF0250 protein CKO_02527 (87 aa).

The protein belongs to the UPF0250 family.

In Citrobacter koseri (strain ATCC BAA-895 / CDC 4225-83 / SGSC4696), this protein is UPF0250 protein CKO_02527.